A 414-amino-acid polypeptide reads, in one-letter code: Acetate kinase (414 aa).

Residue Asn-7 participates in Mg(2+) binding. Position 14 (Lys-14) interacts with ATP. Arg-99 is a binding site for substrate. Asp-157 acts as the Proton donor/acceptor in catalysis. Residues His-217–Gly-221 and Gly-341–Asn-345 contribute to the ATP site. Residue Glu-395 coordinates Mg(2+).

The protein belongs to the acetokinase family. Homodimer. Mg(2+) serves as cofactor. It depends on Mn(2+) as a cofactor.

The protein localises to the cytoplasm. It carries out the reaction acetate + ATP = acetyl phosphate + ADP. It functions in the pathway metabolic intermediate biosynthesis; acetyl-CoA biosynthesis; acetyl-CoA from acetate: step 1/2. Functionally, catalyzes the formation of acetyl phosphate from acetate and ATP. Can also catalyze the reverse reaction. In Solibacter usitatus (strain Ellin6076), this protein is Acetate kinase.